The following is a 218-amino-acid chain: Adenylate kinase (218 aa).

An ATP-binding site is contributed by 11–16; sequence GAGKGT. The interval 31–60 is NMP; the sequence is STGDMFREAMANKTKVGLEAKSYIDKGNLV. AMP-binding positions include Thr-32, Arg-37, 58 to 60, 86 to 89, and Gln-93; these read NLV and GFPR. Positions 127–165 are LID; it reads ARYMCKNCGATYNKLSKQPKVEGTCDRCGSHEFYQREDD. Arg-128 is a binding site for ATP. Cys-131 and Cys-134 together coordinate Zn(2+). ATP is bound at residue 137–138; that stretch reads TY. Positions 151 and 154 each coordinate Zn(2+). 2 residues coordinate AMP: Arg-162 and Arg-173. Position 201 (Gln-201) interacts with ATP.

It belongs to the adenylate kinase family. As to quaternary structure, monomer.

It localises to the cytoplasm. The catalysed reaction is AMP + ATP = 2 ADP. It functions in the pathway purine metabolism; AMP biosynthesis via salvage pathway; AMP from ADP: step 1/1. In terms of biological role, catalyzes the reversible transfer of the terminal phosphate group between ATP and AMP. Plays an important role in cellular energy homeostasis and in adenine nucleotide metabolism. The chain is Adenylate kinase from Lactobacillus helveticus (strain DPC 4571).